Here is a 393-residue protein sequence, read N- to C-terminus: DNA primase large subunit PriL (393 aa).

Residues cysteine 230, cysteine 339, cysteine 350, and cysteine 356 each coordinate [4Fe-4S] cluster.

The protein belongs to the eukaryotic-type primase large subunit family. As to quaternary structure, heterodimer of a small subunit (PriS) and a large subunit (PriL). The cofactor is [4Fe-4S] cluster.

Functionally, regulatory subunit of DNA primase, an RNA polymerase that catalyzes the synthesis of short RNA molecules used as primers for DNA polymerase during DNA replication. Stabilizes and modulates the activity of the small subunit, increasing the rate of DNA synthesis, and conferring RNA synthesis capability. The DNA polymerase activity may enable DNA primase to also catalyze primer extension after primer synthesis. May also play a role in DNA repair. Displays gap-filling and strand-displacement activities. The polypeptide is DNA primase large subunit PriL (Pyrococcus abyssi (strain GE5 / Orsay)).